The primary structure comprises 252 residues: 4-hydroxy-tetrahydrodipicolinate reductase (252 aa).

NAD(+)-binding positions include 8 to 13, 85 to 87, and 109 to 112; these read GCSGKM, CTT, and SANM. Catalysis depends on His142, which acts as the Proton donor/acceptor. Position 143 (His143) interacts with (S)-2,3,4,5-tetrahydrodipicolinate. The Proton donor role is filled by Lys146. 152-153 is a (S)-2,3,4,5-tetrahydrodipicolinate binding site; sequence GT.

This sequence belongs to the DapB family.

The protein localises to the cytoplasm. The catalysed reaction is (S)-2,3,4,5-tetrahydrodipicolinate + NAD(+) + H2O = (2S,4S)-4-hydroxy-2,3,4,5-tetrahydrodipicolinate + NADH + H(+). It carries out the reaction (S)-2,3,4,5-tetrahydrodipicolinate + NADP(+) + H2O = (2S,4S)-4-hydroxy-2,3,4,5-tetrahydrodipicolinate + NADPH + H(+). It functions in the pathway amino-acid biosynthesis; L-lysine biosynthesis via DAP pathway; (S)-tetrahydrodipicolinate from L-aspartate: step 4/4. Its function is as follows. Catalyzes the conversion of 4-hydroxy-tetrahydrodipicolinate (HTPA) to tetrahydrodipicolinate. In Clostridium novyi (strain NT), this protein is 4-hydroxy-tetrahydrodipicolinate reductase.